The chain runs to 234 residues: 2,3-bisphosphoglycerate-dependent phosphoglycerate mutase (234 aa).

Residues 10–17 (RHGSSIWN), 23–24 (TG), arginine 62, 89–92 (ERHY), lysine 100, 116–117 (RR), and 186–187 (GN) contribute to the substrate site. Histidine 11 acts as the Tele-phosphohistidine intermediate in catalysis. The active-site Proton donor/acceptor is the glutamate 89.

This sequence belongs to the phosphoglycerate mutase family. BPG-dependent PGAM subfamily. Homodimer.

The enzyme catalyses (2R)-2-phosphoglycerate = (2R)-3-phosphoglycerate. The protein operates within carbohydrate degradation; glycolysis; pyruvate from D-glyceraldehyde 3-phosphate: step 3/5. Functionally, catalyzes the interconversion of 2-phosphoglycerate and 3-phosphoglycerate. The chain is 2,3-bisphosphoglycerate-dependent phosphoglycerate mutase from Wigglesworthia glossinidia brevipalpis.